Reading from the N-terminus, the 119-residue chain is Ribonuclease P protein component (119 aa).

It belongs to the RnpA family. In terms of assembly, consists of a catalytic RNA component (M1 or rnpB) and a protein subunit.

It catalyses the reaction Endonucleolytic cleavage of RNA, removing 5'-extranucleotides from tRNA precursor.. RNaseP catalyzes the removal of the 5'-leader sequence from pre-tRNA to produce the mature 5'-terminus. It can also cleave other RNA substrates such as 4.5S RNA. The protein component plays an auxiliary but essential role in vivo by binding to the 5'-leader sequence and broadening the substrate specificity of the ribozyme. This Shewanella woodyi (strain ATCC 51908 / MS32) protein is Ribonuclease P protein component.